Consider the following 147-residue polypeptide: Holdfast attachment protein A (147 aa).

Its function is as follows. Involved in attachment of the holdfast to the cell. The holdfast is a structure that allows the bacteria to firmly adheres to surfaces. The chain is Holdfast attachment protein A (hfaA) from Caulobacter vibrioides (strain ATCC 19089 / CIP 103742 / CB 15) (Caulobacter crescentus).